Here is a 158-residue protein sequence, read N- to C-terminus: Large ribosomal subunit protein uL11 (158 aa).

It belongs to the universal ribosomal protein uL11 family. As to quaternary structure, part of the ribosomal stalk of the 50S ribosomal subunit. Interacts with L10 and the large rRNA to form the base of the stalk. L10 forms an elongated spine to which L12 dimers bind in a sequential fashion forming a multimeric L10(L12)X complex.

Functionally, forms part of the ribosomal stalk which helps the ribosome interact with GTP-bound translation factors. This is Large ribosomal subunit protein uL11 from Methanoregula boonei (strain DSM 21154 / JCM 14090 / 6A8).